The primary structure comprises 189 residues: GTPase KRas (189 aa).

At Met1 the chain carries N-acetylmethionine. Position 2 is an N-acetylthreonine; in GTPase KRas, N-terminally processed (Thr2). GTP-binding positions include 10 to 18, 29 to 35, and 59 to 60; these read GAGGVGKSA, VDEYDPT, and AG. Residues 32–40 carry the Effector region motif; it reads YDPTIEDSY. Position 104 is an N6-acetyllysine (Lys104). A GTP-binding site is contributed by 116–119; sequence NKCD. The segment at 166 to 185 is hypervariable region; that stretch reads YRLKKISKEEKTPGCVKIKK. Lys170 is covalently cross-linked (Glycyl lysine isopeptide (Lys-Gly) (interchain with G-Cter in ubiquitin)). The S-palmitoyl cysteine moiety is linked to residue Cys180. N6-palmitoyl lysine attachment occurs at residues Lys182, Lys184, and Lys185. The residue at position 186 (Cys186) is a Cysteine methyl ester. A lipid anchor (S-farnesyl cysteine) is attached at Cys186. A propeptide spans 187-189 (removed in mature form); sequence VIM.

This sequence belongs to the small GTPase superfamily. Ras family. In terms of assembly, interacts with PHLPP. Interacts (active GTP-bound form preferentially) with RGS14. Interacts (when farnesylated) with PDE6D; this promotes dissociation from the cell membrane. Interacts with SOS1. Interacts (when farnesylated) with GPR31. Interacts with RAP1GDS1. Interacts (active GTP-bound form) with both SHOC2 and PP1c (all isoforms) to form a tertiary complex; SHOC2 and PP1c preferably bind M-Ras/MRAS, but they also bind K-Ras/KRAS, N-Ras/NRAS and H-Ras/HRAS. Interacts (GTP-bound form) with MAPKAP1/SIN1; inhibiting K-Ras/KRAS activity. As to quaternary structure, interacts (when farnesylated) with GPR31. Post-translationally, acetylation at Lys-104 prevents interaction with guanine nucleotide exchange factors (GEFs). Ubiquitinated by the BCR(LZTR1) E3 ubiquitin ligase complex at Lys-170 in a non-degradative manner, leading to inhibit Ras signaling by decreasing Ras association with membranes. In terms of processing, palmitoylated at Lys-182, Lys-184 and Lys-185. Lysine-depalmitoylation by SIRT2 promotes its localization to endomembranes in endocytic pathways.

Its subcellular location is the cell membrane. It localises to the endomembrane system. It is found in the cytoplasm. The protein localises to the cytosol. It carries out the reaction GTP + H2O = GDP + phosphate + H(+). With respect to regulation, alternates between an inactive form bound to GDP and an active form bound to GTP. Activated by a guanine nucleotide-exchange factor (GEF) and inactivated by a GTPase-activating protein (GAP). Interaction with SOS1 promotes exchange of bound GDP to GTP. Ras proteins bind GDP/GTP and possess intrinsic GTPase activity. Plays an important role in the regulation of cell proliferation. Plays a role in promoting oncogenic events by inducing transcriptional silencing of tumor suppressor genes (TSGs) in colorectal cancer (CRC) cells in a ZNF304-dependent manner. This chain is GTPase KRas (Kras), found in Rattus norvegicus (Rat).